Consider the following 229-residue polypeptide: Ribose-5-phosphate isomerase A (229 aa).

Substrate contacts are provided by residues 28 to 31 (TGST), 84 to 87 (DGAD), and 97 to 100 (KGGG). The Proton acceptor role is filled by Glu106. Lys124 contributes to the substrate binding site.

It belongs to the ribose 5-phosphate isomerase family. In terms of assembly, homodimer.

It carries out the reaction aldehydo-D-ribose 5-phosphate = D-ribulose 5-phosphate. It functions in the pathway carbohydrate degradation; pentose phosphate pathway; D-ribose 5-phosphate from D-ribulose 5-phosphate (non-oxidative stage): step 1/1. In terms of biological role, catalyzes the reversible conversion of ribose-5-phosphate to ribulose 5-phosphate. The sequence is that of Ribose-5-phosphate isomerase A from Lacticaseibacillus paracasei (strain ATCC 334 / BCRC 17002 / CCUG 31169 / CIP 107868 / KCTC 3260 / NRRL B-441) (Lactobacillus paracasei).